Here is a 498-residue protein sequence, read N- to C-terminus: ATP synthase subunit beta, chloroplastic (498 aa).

172-179 contributes to the ATP binding site; sequence GGAGVGKT.

The protein belongs to the ATPase alpha/beta chains family. In terms of assembly, F-type ATPases have 2 components, CF(1) - the catalytic core - and CF(0) - the membrane proton channel. CF(1) has five subunits: alpha(3), beta(3), gamma(1), delta(1), epsilon(1). CF(0) has four main subunits: a(1), b(1), b'(1) and c(9-12).

The protein resides in the plastid. It localises to the chloroplast thylakoid membrane. The catalysed reaction is ATP + H2O + 4 H(+)(in) = ADP + phosphate + 5 H(+)(out). In terms of biological role, produces ATP from ADP in the presence of a proton gradient across the membrane. The catalytic sites are hosted primarily by the beta subunits. In Nicotiana bigelovii (Bigelov's tobacco), this protein is ATP synthase subunit beta, chloroplastic.